Consider the following 872-residue polypeptide: Alanine--tRNA ligase (872 aa).

Zn(2+)-binding residues include His-567, His-571, Cys-669, and His-673.

This sequence belongs to the class-II aminoacyl-tRNA synthetase family. Requires Zn(2+) as cofactor.

It is found in the cytoplasm. It carries out the reaction tRNA(Ala) + L-alanine + ATP = L-alanyl-tRNA(Ala) + AMP + diphosphate. Functionally, catalyzes the attachment of alanine to tRNA(Ala) in a two-step reaction: alanine is first activated by ATP to form Ala-AMP and then transferred to the acceptor end of tRNA(Ala). Also edits incorrectly charged Ser-tRNA(Ala) and Gly-tRNA(Ala) via its editing domain. The sequence is that of Alanine--tRNA ligase from Streptococcus pyogenes serotype M18 (strain MGAS8232).